The sequence spans 355 residues: Phosphoserine aminotransferase (355 aa).

Residue R41 coordinates L-glutamate. Residues 75 to 76 (AS), W99, T147, D166, and Q189 each bind pyridoxal 5'-phosphate. N6-(pyridoxal phosphate)lysine is present on K190. Residue 231 to 232 (NT) participates in pyridoxal 5'-phosphate binding.

It belongs to the class-V pyridoxal-phosphate-dependent aminotransferase family. SerC subfamily. As to quaternary structure, homodimer. The cofactor is pyridoxal 5'-phosphate.

The protein resides in the cytoplasm. The enzyme catalyses O-phospho-L-serine + 2-oxoglutarate = 3-phosphooxypyruvate + L-glutamate. It catalyses the reaction 4-(phosphooxy)-L-threonine + 2-oxoglutarate = (R)-3-hydroxy-2-oxo-4-phosphooxybutanoate + L-glutamate. It functions in the pathway amino-acid biosynthesis; L-serine biosynthesis; L-serine from 3-phospho-D-glycerate: step 2/3. The protein operates within cofactor biosynthesis; pyridoxine 5'-phosphate biosynthesis; pyridoxine 5'-phosphate from D-erythrose 4-phosphate: step 3/5. Its function is as follows. Catalyzes the reversible conversion of 3-phosphohydroxypyruvate to phosphoserine and of 3-hydroxy-2-oxo-4-phosphonooxybutanoate to phosphohydroxythreonine. This chain is Phosphoserine aminotransferase, found in Bacteroides thetaiotaomicron (strain ATCC 29148 / DSM 2079 / JCM 5827 / CCUG 10774 / NCTC 10582 / VPI-5482 / E50).